Here is a 270-residue protein sequence, read N- to C-terminus: uncharacterized protein (270 aa).

The 50-residue stretch at 1–50 (LTEVVKAQSFTKAAENLYTSQPSISRDIKRLENDYDVKVFEFKHSKMTLT) folds into the HTH lysR-type domain. Residues 10-29 (FTKAAENLYTSQPSISRDIK) constitute a DNA-binding region (H-T-H motif).

Belongs to the LysR transcriptional regulatory family.

This is an uncharacterized protein from Staphylococcus xylosus.